The following is a 218-amino-acid chain: LHFPL tetraspan subfamily member 3 protein (218 aa).

Helical transmembrane passes span 22–42 (IGVL…VCFI), 96–116 (FFIG…GLFF), 126–146 (ICAW…MIFP), and 177–197 (ILAI…FVLG).

It belongs to the LHFP family.

Its subcellular location is the membrane. The chain is LHFPL tetraspan subfamily member 3 protein from Xenopus laevis (African clawed frog).